Here is a 136-residue protein sequence, read N- to C-terminus: Small ribosomal subunit protein bS6 (136 aa).

The disordered stretch occupies residues 99–136 (QSEMLKAEENRSERRERRERPEHGGHEGLDGDSDKADE). Residues 103–136 (LKAEENRSERRERRERPEHGGHEGLDGDSDKADE) show a composition bias toward basic and acidic residues.

It belongs to the bacterial ribosomal protein bS6 family.

Functionally, binds together with bS18 to 16S ribosomal RNA. The chain is Small ribosomal subunit protein bS6 from Azotobacter vinelandii (strain DJ / ATCC BAA-1303).